A 274-amino-acid chain; its full sequence is Formamidopyrimidine-DNA glycosylase (274 aa).

Pro-2 serves as the catalytic Schiff-base intermediate with DNA. The active-site Proton donor is Glu-3. Lys-56 acts as the Proton donor; for beta-elimination activity in catalysis. His-89, Arg-107, and Lys-148 together coordinate DNA. The FPG-type zinc finger occupies 233–267 (LAYGRAREMCVNCETTLENLKLGQRASVFCPQCQP). The active-site Proton donor; for delta-elimination activity is the Arg-257.

It belongs to the FPG family. Monomer. Zn(2+) is required as a cofactor.

It catalyses the reaction Hydrolysis of DNA containing ring-opened 7-methylguanine residues, releasing 2,6-diamino-4-hydroxy-5-(N-methyl)formamidopyrimidine.. It carries out the reaction 2'-deoxyribonucleotide-(2'-deoxyribose 5'-phosphate)-2'-deoxyribonucleotide-DNA = a 3'-end 2'-deoxyribonucleotide-(2,3-dehydro-2,3-deoxyribose 5'-phosphate)-DNA + a 5'-end 5'-phospho-2'-deoxyribonucleoside-DNA + H(+). Functionally, involved in base excision repair of DNA damaged by oxidation or by mutagenic agents. Acts as a DNA glycosylase that recognizes and removes damaged bases. Has a preference for oxidized purines, such as 7,8-dihydro-8-oxoguanine (8-oxoG). Has AP (apurinic/apyrimidinic) lyase activity and introduces nicks in the DNA strand. Cleaves the DNA backbone by beta-delta elimination to generate a single-strand break at the site of the removed base with both 3'- and 5'-phosphates. The protein is Formamidopyrimidine-DNA glycosylase of Acinetobacter baumannii (strain SDF).